The primary structure comprises 1009 residues: MICCEIQQKSHKKNKPQPDDKSLLARFFHADRSLTAVASELDSFDGRAEPDRCSRLVSRLRQNQDKVLSITNLIMEELLGEDRDPRAFRAKFPEEVLQENLAGQLWFGAECLAAGSSIMNREVESKEMRPLAQAVTKSLGNVRVLLRDQCLRNNVPNSKTLHLDLNDYTTEQLYESLKIFDRLFAEFELSYVSAMVQVKSRHEYEMQQWIGVLFSETLQRALKIGLLDQDMVDAFDPGLMFSIPRLAIVAGLVVYAKGPLDMDMPGDQLSEMFRPFRTILIKIRDLLRNLNNQELYQLEKLLCTNEDINTKVPVGSSSIEAPTPEHSSTPTTSSNNNNNNKSSSSSSGTGSGSGAGTVERLVDQRNNNNNQQNSNESTTLPPRSPSMLSLSASSTPTASPAPSPTPSHSIASTTSSAASSNSTHPPADWSDGDDEDEDEEEDEEEDELEDTEDDTDEEQLLKDIVAADCASGYLIPNTNLGNLLQPQQVPLTDNFVASEDDDEYGTGDQQQEQPQQQGHRKEDEEEPSTSAALQRLRLASSDDSEPHRDQGETIKSTEEQEQQQQQQEQQTLQSSRQRHSHSHSHSHRHHHRHHHHHHHSTHQQQLQHQPHHHQPHPHRLTRSGRKRCSMEAAVEVEQQEQGLASGDTSAASSLSDDVSLAMRNTTARLKFNTENLLHRLFVCIAGVADQLQTNFASDLRQILRSVFLMNMSSVEEEQIEIPEKTKESELFEFRASENDVIQESAGSNQSIYSAEEVNPELDNVFSAGSRHSAGATMQRNNTIDNPSSSNTSSSSATTRNHVTRSRSLGDQETIARSMPAPVHQQEQEMQQQQDHQQQQHQHQVQVQLQRQRNNSVGSNTPSSASSTSSSSEQNSPVSTRSGSSRRRLQSNNETQMPSSTSTATAAATLAPPAWIPDGKAPRCMSCQTPFTAFRRRHHCRNCGGVFCGVCSNATAPLPKYGLTKAVRVCRDCYVREVQVRSSSTTTSVSVNVGVQMQSQAGRVQTATAS.

Disordered regions lie at residues 313-460 (PVGS…EEQL), 497-629 (ASED…KRCS), and 777-905 (MQRN…TATA). Low complexity-rich tracts occupy residues 327–348 (SSTP…SSSG), 364–398 (QRNN…TPTA), and 406–427 (PSHS…HPPA). Positions 430 to 458 (SDGDDEDEDEEEDEEEDELEDTEDDTDEE) are enriched in acidic residues. The residue at position 541 (S541) is a Phosphoserine. Over residues 544–558 (SEPHRDQGETIKSTE) the composition is skewed to basic and acidic residues. The span at 562 to 575 (QQQQQQEQQTLQSS) shows a compositional bias: low complexity. Basic residues-rich tracts occupy residues 576-601 (RQRH…HHST) and 609-627 (QPHH…GRKR). Low complexity predominate over residues 780 to 798 (NNTIDNPSSSNTSSSSATT). Phosphoserine is present on S807. The span at 822–878 (VHQQEQEMQQQQDHQQQQHQHQVQVQLQRQRNNSVGSNTPSSASSTSSSSEQNSPVS) shows a compositional bias: low complexity. Residues 917 to 977 (DGKAPRCMSC…VCRDCYVREV (61 aa)) form an FYVE-type zinc finger. Zn(2+) contacts are provided by C923, C926, C939, C942, C947, C950, C969, and C972.

Belongs to the lst-2 family.

Functionally, negative regulator of epidermal growth factor receptor (EGFR) signaling. The sequence is that of Lateral signaling target protein 2 homolog from Drosophila persimilis (Fruit fly).